The primary structure comprises 202 residues: uncharacterized protein (202 aa).

Positions 1–18 (MKNRLLILSLLVSVPAFA) are cleaved as a signal peptide.

To E.coli YebB.

This is an uncharacterized protein from Escherichia coli (strain K12).